The following is a 295-amino-acid chain: Pyridoxal 5'-phosphate synthase subunit PdxS (295 aa).

Residue aspartate 25 coordinates D-ribose 5-phosphate. Residue lysine 82 is the Schiff-base intermediate with D-ribose 5-phosphate of the active site. Glycine 154 contacts D-ribose 5-phosphate. D-glyceraldehyde 3-phosphate is bound at residue arginine 166. D-ribose 5-phosphate is bound by residues glycine 215 and 236–237 (GS).

The protein belongs to the PdxS/SNZ family. In the presence of PdxT, forms a dodecamer of heterodimers.

It carries out the reaction aldehydo-D-ribose 5-phosphate + D-glyceraldehyde 3-phosphate + L-glutamine = pyridoxal 5'-phosphate + L-glutamate + phosphate + 3 H2O + H(+). It functions in the pathway cofactor biosynthesis; pyridoxal 5'-phosphate biosynthesis. Catalyzes the formation of pyridoxal 5'-phosphate from ribose 5-phosphate (RBP), glyceraldehyde 3-phosphate (G3P) and ammonia. The ammonia is provided by the PdxT subunit. Can also use ribulose 5-phosphate and dihydroxyacetone phosphate as substrates, resulting from enzyme-catalyzed isomerization of RBP and G3P, respectively. This Bacillus cereus (strain B4264) protein is Pyridoxal 5'-phosphate synthase subunit PdxS.